Reading from the N-terminus, the 412-residue chain is Argininosuccinate synthase (412 aa).

Residues 12–20 (AYSGGLDTS) and A39 each bind ATP. Residues Y91 and S96 each contribute to the L-citrulline site. G121 is a binding site for ATP. 3 residues coordinate L-aspartate: T123, N127, and D128. Residue N127 coordinates L-citrulline. 5 residues coordinate L-citrulline: R131, S180, S189, E265, and Y277.

It belongs to the argininosuccinate synthase family. Type 1 subfamily. In terms of assembly, homotetramer.

The protein localises to the cytoplasm. It catalyses the reaction L-citrulline + L-aspartate + ATP = 2-(N(omega)-L-arginino)succinate + AMP + diphosphate + H(+). It functions in the pathway amino-acid biosynthesis; L-arginine biosynthesis; L-arginine from L-ornithine and carbamoyl phosphate: step 2/3. This is Argininosuccinate synthase from Pseudoalteromonas atlantica (strain T6c / ATCC BAA-1087).